Reading from the N-terminus, the 677-residue chain is Methionine--tRNA ligase (677 aa).

A 'HIGH' region motif is present at residues 15-25; sequence PYANGSIHLGH. Residues cysteine 146, cysteine 149, cysteine 159, and cysteine 162 each coordinate Zn(2+). A 'KMSKS' region motif is present at residues 333–337; it reads KMSKS. Lysine 336 contributes to the ATP binding site. The 103-residue stretch at 575–677 folds into the tRNA-binding domain; it reads DFAKIDLRVA…DGAKPGQQVK (103 aa).

The protein belongs to the class-I aminoacyl-tRNA synthetase family. MetG type 1 subfamily. Homodimer. Requires Zn(2+) as cofactor.

It is found in the cytoplasm. The catalysed reaction is tRNA(Met) + L-methionine + ATP = L-methionyl-tRNA(Met) + AMP + diphosphate. In terms of biological role, is required not only for elongation of protein synthesis but also for the initiation of all mRNA translation through initiator tRNA(fMet) aminoacylation. The chain is Methionine--tRNA ligase from Salmonella paratyphi A (strain AKU_12601).